The sequence spans 181 residues: SecB-like chaperone Rv1957 (181 aa).

Thr2 carries the post-translational modification N-acetylthreonine.

It belongs to the SecB-like family. As to quaternary structure, homotetramer, interacts with antitoxin HigA1.

Chaperone component of an atypical, type II toxin-antitoxin chaperone (TAC) system. Prevents antitoxin HigA1 aggregation in vitro at a 1:3 chaperone:antitoxin ratio, probably also protects antitoxin HigA1 from protease. Required for neutralization of toxin HigB1 upon ectopic expression in Mycobacterium marinum or E.coli. When expressed in E.coli complements a secB deletion, restores export of OmpA and MBP and inhibits aggregation of proOmpC although it is less efficient than endogenous SecB. Complements the general chaperone function of E.coli SecB less well. This Mycobacterium tuberculosis (strain ATCC 25618 / H37Rv) protein is SecB-like chaperone Rv1957 (secBL).